A 201-amino-acid chain; its full sequence is Myelomonocytic growth factor (201 aa).

Residues Met-1–Gly-23 form the signal peptide. Cystine bridges form between Cys-61-Cys-67 and Cys-89-Cys-99. Asn-123 and Asn-137 each carry an N-linked (GlcNAc...) asparagine glycan.

It belongs to the IL-6 superfamily.

Its subcellular location is the secreted. Its function is as follows. Hematopoietic growth factor that stimulates the proliferation and colony formation of normal and transformed avian cells of the myeloid lineage. The protein is Myelomonocytic growth factor of Gallus gallus (Chicken).